The primary structure comprises 189 residues: Elongation factor P (189 aa).

The residue at position 34 (Lys-34) is an N6-(3,6-diaminohexanoyl)-5-hydroxylysine.

The protein belongs to the elongation factor P family. May be beta-lysylated on the epsilon-amino group of Lys-34 by the combined action of EpmA and EpmB, and then hydroxylated on the C5 position of the same residue by EpmC (if this protein is present). Lysylation is critical for the stimulatory effect of EF-P on peptide-bond formation. The lysylation moiety may extend toward the peptidyltransferase center and stabilize the terminal 3-CCA end of the tRNA. Hydroxylation of the C5 position on Lys-34 may allow additional potential stabilizing hydrogen-bond interactions with the P-tRNA.

The protein localises to the cytoplasm. Its pathway is protein biosynthesis; polypeptide chain elongation. Involved in peptide bond synthesis. Alleviates ribosome stalling that occurs when 3 or more consecutive Pro residues or the sequence PPG is present in a protein, possibly by augmenting the peptidyl transferase activity of the ribosome. Modification of Lys-34 is required for alleviation. This chain is Elongation factor P, found in Buchnera aphidicola subsp. Baizongia pistaciae (strain Bp).